A 155-amino-acid chain; its full sequence is Endoribonuclease YbeY (155 aa).

Zn(2+) contacts are provided by His-114, His-118, and His-124.

This sequence belongs to the endoribonuclease YbeY family. Requires Zn(2+) as cofactor.

The protein resides in the cytoplasm. Single strand-specific metallo-endoribonuclease involved in late-stage 70S ribosome quality control and in maturation of the 3' terminus of the 16S rRNA. The polypeptide is Endoribonuclease YbeY (Escherichia coli O6:K15:H31 (strain 536 / UPEC)).